The primary structure comprises 407 residues: Methylthioribose kinase (407 aa).

Residues asparagine 40, lysine 57, and 111 to 113 (EDL) each bind ATP. Position 229 (aspartate 229) interacts with substrate. Residue 246–248 (DAE) participates in ATP binding. Residue arginine 344 coordinates substrate.

Belongs to the methylthioribose kinase family. In terms of assembly, homodimer.

It carries out the reaction 5-(methylsulfanyl)-D-ribose + ATP = 5-(methylsulfanyl)-alpha-D-ribose 1-phosphate + ADP + H(+). It participates in amino-acid biosynthesis; L-methionine biosynthesis via salvage pathway; S-methyl-5-thio-alpha-D-ribose 1-phosphate from S-methyl-5'-thioadenosine (hydrolase route): step 2/2. In terms of biological role, catalyzes the phosphorylation of methylthioribose into methylthioribose-1-phosphate. The protein is Methylthioribose kinase of Yersinia pestis bv. Antiqua (strain Angola).